A 468-amino-acid chain; its full sequence is Microtubule-associated tyrosine carboxypeptidase 1 (468 aa).

The segment covering 1–10 has biased composition (polar residues); that stretch reads MVLDSGTQVY. 2 disordered regions span residues 1-39 and 77-112; these read MVLDSGTQVYEQAPPSPPASSPSQHHKLKPSNRNGPPLY and MKRSESTYSVNSTGRRGRGKAPLGRGCDPGGGTLRP. H277 lines the Zn(2+) pocket. E278 functions as the Nucleophile in the catalytic mechanism. Residues H282 and E313 each contribute to the Zn(2+) site.

It belongs to the peptidase MATCAP family. Zn(2+) serves as cofactor.

The protein resides in the cytoplasm. The protein localises to the cytoskeleton. It catalyses the reaction C-terminal L-alpha-aminoacyl-L-glutamyl-L-glutamyl-L-tyrosyl-[tubulin] + H2O = C-terminal L-alpha-aminoacyl-L-glutamyl-L-glutamyl-[tubulin] + L-tyrosine. The enzyme catalyses C-terminal L-alpha-aminoacyl-L-glutamyl-L-glutamyl-L-phenylalanyl-[tubulin] + H2O = C-terminal L-alpha-aminoacyl-L-glutamyl-L-glutamyl-[tubulin] + L-phenylalanine. Its function is as follows. Tyrosine carboxypeptidase that removes the C-terminal tyrosine residue of alpha-tubulin, thereby regulating microtubule dynamics and function. Also able to remove the C-terminal phenylalanine residue of alpha-tubulin TUBA8. Recognizes adjacent tubulin dimers along the same protofilament. The polypeptide is Microtubule-associated tyrosine carboxypeptidase 1 (Rattus norvegicus (Rat)).